Here is a 98-residue protein sequence, read N- to C-terminus: Guanine nucleotide-binding protein subunit gamma 1 (98 aa).

A G protein gamma domain is found at G19 to L98. Residues K20 to V50 adopt a coiled-coil conformation. Positions N88–R94 are regulates lipidation and cell membrane subcellular localization. A lipid anchor (S-palmitoyl cysteine) is attached at C93. Residue C95 is modified to Cysteine methyl ester. C95 carries the S-farnesyl cysteine lipid modification. Residues L96–L98 constitute a propeptide, removed in mature form.

In terms of assembly, g proteins are composed of 3 units, alpha, beta and gamma. Interacts with the beta subunit GB1. The dimer GB1-GG1 interacts with NDL1, NDL2 and NDL3. Binds to NUDT7. As to expression, mostly expressed in seedlings (especially at the hypocotyl/root junction), young cauline leaves, open flowers, and floral stems, and, to a lower extent, in roots (restricted to the stele), rosette leaves (restricted to veins), siliques, and unopened floral buds. Also present in hydathods.

The protein resides in the cell membrane. It is found in the golgi apparatus membrane. It localises to the golgi apparatus. Its subcellular location is the trans-Golgi network membrane. The protein localises to the cytoplasm. Guanine nucleotide-binding proteins (G proteins) are involved as a modulator or transducer in various transmembrane signaling systems. The beta and gamma chains are required for the GTPase activity, for replacement of GDP by GTP, and for G protein-effector interaction. Involved in the abscisic acid (ABA) and ethylene signaling pathways. Regulates acropetal transport of auxin (IAA) in roots and hypocotyls, and thus modulates root architecture (e.g. lateral root formation). The heterotrimeric G-protein controls defense responses to necrotrophic and vascular fungi probably by modulating cell wall-related genes expression; involved in resistance to fungal pathogens such as Alternaria brassicicola, Plectosphaerella cucumerina and Fusarium oxysporum. This Arabidopsis thaliana (Mouse-ear cress) protein is Guanine nucleotide-binding protein subunit gamma 1 (GG1).